The sequence spans 339 residues: Ribosomal RNA small subunit methyltransferase H (339 aa).

S-adenosyl-L-methionine-binding positions include 40-42, aspartate 58, phenylalanine 85, aspartate 106, and glutamine 113; that span reads GGY.

This sequence belongs to the methyltransferase superfamily. RsmH family.

It localises to the cytoplasm. It catalyses the reaction cytidine(1402) in 16S rRNA + S-adenosyl-L-methionine = N(4)-methylcytidine(1402) in 16S rRNA + S-adenosyl-L-homocysteine + H(+). Specifically methylates the N4 position of cytidine in position 1402 (C1402) of 16S rRNA. In Parvibaculum lavamentivorans (strain DS-1 / DSM 13023 / NCIMB 13966), this protein is Ribosomal RNA small subunit methyltransferase H.